The following is a 444-amino-acid chain: Tol-Pal system protein TolB (444 aa).

A signal peptide spans 1–31 (MSFDLNRRQLMISAATAAGALALGPARDAFG).

This sequence belongs to the TolB family. The Tol-Pal system is composed of five core proteins: the inner membrane proteins TolA, TolQ and TolR, the periplasmic protein TolB and the outer membrane protein Pal. They form a network linking the inner and outer membranes and the peptidoglycan layer.

It is found in the periplasm. Functionally, part of the Tol-Pal system, which plays a role in outer membrane invagination during cell division and is important for maintaining outer membrane integrity. The protein is Tol-Pal system protein TolB of Rhodopseudomonas palustris (strain ATCC BAA-98 / CGA009).